The sequence spans 949 residues: Lon protease homolog, mitochondrial (949 aa).

Residues 1–65 constitute a mitochondrion transit peptide; that stretch reads MAASTGYVRL…VLPGGVQWRG (65 aa). Disordered stretches follow at residues 68–94 and 213–240; these read DSGN…TGEG and EGLE…DELG. The Lon N-terminal domain maps to 112–359; the sequence is LPLIAITRNP…KALSLLKKEF (248 aa). Residues 223–232 are compositionally biased toward basic residues; that stretch reads KSRRKLKRGK. Position 512-519 (512-519) interacts with ATP; the sequence is GPPGVGKT. The region spanning 748–938 is the Lon proteolytic domain; it reads VTPPGVVMGL…RDIFPIAFPR (191 aa). Active-site residues include serine 844 and lysine 887.

This sequence belongs to the peptidase S16 family. Homohexamer. Organized in a ring with a central cavity. The ATP-binding and proteolytic domains (AP-domain) form a hexameric chamber, while the N-terminal domain is arranged as a trimer of dimers. DNA and RNA binding is stimulated by substrate and inhibited by ATP binding. Interacts with TWNK and mitochondrial DNA polymerase subunit POLG. As to expression, detected in liver &gt; heart &gt; kidney &gt; testis.

Its subcellular location is the mitochondrion matrix. The enzyme catalyses Hydrolysis of proteins in presence of ATP.. ATP-dependent serine protease that mediates the selective degradation of misfolded, unassembled or oxidatively damaged polypeptides as well as certain short-lived regulatory proteins in the mitochondrial matrix. Endogenous substrates include mitochondrial steroidogenic acute regulatory (StAR) protein, DELE1, helicase Twinkle (TWNK) and the large ribosomal subunit protein MRPL32/bL32m. MRPL32/bL32m is protected from degradation by LONP1 when it is bound to a nucleic acid (RNA), but TWNK is not. May also have a chaperone function in the assembly of inner membrane protein complexes. Participates in the regulation of mitochondrial gene expression and in the maintenance of the integrity of the mitochondrial genome. Binds to mitochondrial promoters and RNA in a single-stranded, site-specific, and strand-specific manner. May regulate mitochondrial DNA replication and/or gene expression using site-specific, single-stranded DNA binding to target the degradation of regulatory proteins binding to adjacent sites in mitochondrial promoters. This is Lon protease homolog, mitochondrial (Lonp1) from Mus musculus (Mouse).